The following is a 273-amino-acid chain: L-cysteine S-thiosulfotransferase subunit SoxA (273 aa).

Positions 1–24 (MKKTVTAVALLCALSSTAIAPTFA) are cleaved as a signal peptide. A disulfide bond links Cys-74 and Cys-110. In terms of domain architecture, Cytochrome c spans 162–273 (EMYELGKRMF…GVMLTPGIKR (112 aa)). Positions 182 and 186 each coordinate heme. Arg-230 contributes to the substrate binding site. Cys-234 contributes to the heme binding site. Cys-234 functions as the Cysteine persulfide intermediate in the catalytic mechanism.

This sequence belongs to the SoxA family. As to quaternary structure, heterodimer of SoxA and SoxX. Heme serves as cofactor. Cysteine persulfide at Cys-234.

Its subcellular location is the periplasm. The enzyme catalyses L-cysteinyl-[SoxY protein] + thiosulfate + 2 Fe(III)-[cytochrome c] = S-sulfosulfanyl-L-cysteinyl-[SoxY protein] + 2 Fe(II)-[cytochrome c] + 2 H(+). The catalysed reaction is S-sulfanyl-L-cysteinyl-[SoxY protein] + thiosulfate + 2 Fe(III)-[cytochrome c] = S-(2-sulfodisulfanyl)-L-cysteinyl-[SoxY protein] + 2 Fe(II)-[cytochrome c] + 2 H(+). Functionally, C-type monoheme cytochrome, which is part of the SoxAX cytochrome complex involved in sulfur oxidation. The SoxAX complex catalyzes the formation of a heterodisulfide bond between the conserved cysteine residue on a sulfur carrier SoxYZ complex subunit SoxY and thiosulfate or other inorganic sulfur substrates. This leads to the liberation of two electrons, which may be transferred from the SoxAX complex to another cytochrome c that then channels them into the respiratory electron transport chain. Some electrons may be used for reductive CO(2) fixation. The polypeptide is L-cysteine S-thiosulfotransferase subunit SoxA (Hydrogenophilus thermoluteolus (Pseudomonas hydrogenothermophila)).